A 1277-amino-acid chain; its full sequence is Clustered mitochondria protein 1 (1277 aa).

2 disordered regions span residues L19–K39 and L148–K176. A compositionally biased stretch (basic residues) spans H27–Q36. The span at I153–K176 shows a compositional bias: basic and acidic residues. A Clu domain is found at P339–A596. TPR repeat units lie at residues G704 to D738, A1020 to V1053, and G1148 to Q1181. The interval L1212 to K1277 is disordered. Basic and acidic residues predominate over residues K1235–D1249. S1247 is modified (phosphoserine). A compositionally biased stretch (basic residues) spans S1264–K1277.

It belongs to the CLU family. In terms of assembly, may associate with the eukaryotic translation initiation factor 3 (eIF-3) complex. Associates with the 80S ribosome.

The protein localises to the cytoplasm. Its function is as follows. mRNA-binding protein involved in proper cytoplasmic distribution of mitochondria. In Saccharomyces cerevisiae (strain ATCC 204508 / S288c) (Baker's yeast), this protein is Clustered mitochondria protein 1.